Consider the following 22-residue polypeptide: Piscidin-3 (22 aa).

G22 carries the glycine amide modification.

The protein belongs to the pleurocidin family. In terms of tissue distribution, mast cells in gill, skin and gut, and in lining blood vessels in the viscera.

It is found in the secreted. Its subcellular location is the membrane. Antimicrobial peptide with broad-spectrum activity against Gram-positive and Gram-negative bacteria. Rapidly inactivates both channel catfish herpesvirus (ED(50)=11 uM) and frog virus 3 (ED(50)=16 uM) over a wide temperature range. Has hemolytic activity. This chain is Piscidin-3, found in Morone chrysops x Morone saxatilis (White bass x Striped bass).